The following is a 474-amino-acid chain: B-cell CLL/lymphoma 6 member B protein (474 aa).

A BTB domain is found at 38–105 (TDVTLLVGGQ…MYTSRLRLSP (68 aa)). Disordered regions lie at residues 144-190 (PVEV…PDPK) and 210-249 (GSLVGESSGQPCPQARLPSGDEACSSSSSSEEGTTPGLQS). The span at 150–160 (PRPPTVAPPGS) shows a compositional bias: pro residues. Residues 162-172 (RRSEGHPDPPT) show a composition bias toward basic and acidic residues. Polar residues-rich tracts occupy residues 173–183 (ESRSCSQGSPS), 210–220 (GSLVGESSGQP), and 240–249 (EEGTTPGLQS). 5 C2H2-type zinc fingers span residues 323–345 (YKCQLCRSAFRYKGNLASHRTVH), 351–373 (YRCSICGARFNRPANLKTHSRIH), 379–401 (YKCETCGSRFVQVAHLRAHVLIH), 407–429 (YPCPTCGTRFRHLQTLKSHVRIH), and 435–458 (YHCDPCGLHFRHKSQLRLHLRQKH).

As to quaternary structure, associates with BCL6 through the BTB domain. Ubiquitously expressed with higher expression found in heart and lung.

The protein localises to the nucleus. In terms of biological role, acts as a sequence-specific transcriptional repressor in association with BCL6. Necessary for activation of naive T-cells to antigenic stimulation. May attenuate the regulatory effect of BCL6 on antigenic activation of naive CD4 T-cells by forming a heterodimer with BCL6. In Mus musculus (Mouse), this protein is B-cell CLL/lymphoma 6 member B protein (Bcl6b).